The chain runs to 425 residues: Monoacylglycerol lipase ABHD2 (425 aa).

At 1–9 the chain is on the cytoplasmic side; sequence MNAMLETPE. A helical; Signal-anchor for type II membrane protein membrane pass occupies residues 10-30; the sequence is LPAVFDGVKLAAVAAVLYVIV. Residues 31-425 are Extracellular-facing; sequence RCLNLKSPTA…DTEQMEAELE (395 aa). The AB hydrolase-1 domain occupies 128–382; the sequence is MVICPGIANH…HGGHLGFFEG (255 aa). Asn136 carries an N-linked (GlcNAc...) asparagine glycan. The Nucleophile role is filled by Ser207. Catalysis depends on charge relay system residues Asp345 and His376. Residue Asn410 is glycosylated (N-linked (GlcNAc...) asparagine).

This sequence belongs to the AB hydrolase superfamily. AB hydrolase 4 family. As to expression, widely expressed with higher expression in testis. Expressed by vascular smooth muscle cells, non vascular smooth muscle cells and heart.

The protein localises to the cell membrane. It localises to the cytoplasmic vesicle. It is found in the secretory vesicle. Its subcellular location is the acrosome membrane. It carries out the reaction Hydrolyzes glycerol monoesters of long-chain fatty acids.. The enzyme catalyses an acetyl ester + H2O = an aliphatic alcohol + acetate + H(+). It catalyses the reaction a triacylglycerol + H2O = a diacylglycerol + a fatty acid + H(+). The catalysed reaction is 2-(5Z,8Z,11Z,14Z-eicosatetraenoyl)-glycerol + H2O = glycerol + (5Z,8Z,11Z,14Z)-eicosatetraenoate + H(+). It carries out the reaction a butanoate ester + H2O = an aliphatic alcohol + butanoate + H(+). The enzyme catalyses hexadecanoate ester + H2O = an aliphatic alcohol + hexadecanoate + H(+). Acylglycerol lipase activity is activated upon binding to progesterone. Progesterone-dependent acylglycerol lipase that catalyzes hydrolysis of endocannabinoid arachidonoylglycerol (AG) from cell membrane. Acts as a progesterone receptor: progesterone-binding activates the acylglycerol lipase activity, mediating degradation of 1-arachidonoylglycerol (1AG) and 2-arachidonoylglycerol (2AG) to glycerol and arachidonic acid (AA). Also displays an ester hydrolase activity against acetyl ester, butanoate ester and hexadecanoate ester. Plays a key role in sperm capacitation in response to progesterone by mediating degradation of 2AG, an inhibitor of the sperm calcium channel CatSper, leading to calcium influx via CatSper and sperm activation. Involved in acrosomal reaction. May also play a role in smooth muscle cells migration. The chain is Monoacylglycerol lipase ABHD2 (Abhd2) from Mus musculus (Mouse).